The primary structure comprises 315 residues: Acetyl-coenzyme A carboxylase carboxyl transferase subunit alpha (315 aa).

In terms of domain architecture, CoA carboxyltransferase C-terminal spans 36 to 289; it reads LSKKRLELME…RKAVAAELKI (254 aa).

Belongs to the AccA family. In terms of assembly, acetyl-CoA carboxylase is a heterohexamer composed of biotin carboxyl carrier protein (AccB), biotin carboxylase (AccC) and two subunits each of ACCase subunit alpha (AccA) and ACCase subunit beta (AccD).

The protein localises to the cytoplasm. It catalyses the reaction N(6)-carboxybiotinyl-L-lysyl-[protein] + acetyl-CoA = N(6)-biotinyl-L-lysyl-[protein] + malonyl-CoA. It functions in the pathway lipid metabolism; malonyl-CoA biosynthesis; malonyl-CoA from acetyl-CoA: step 1/1. Functionally, component of the acetyl coenzyme A carboxylase (ACC) complex. First, biotin carboxylase catalyzes the carboxylation of biotin on its carrier protein (BCCP) and then the CO(2) group is transferred by the carboxyltransferase to acetyl-CoA to form malonyl-CoA. The polypeptide is Acetyl-coenzyme A carboxylase carboxyl transferase subunit alpha (Francisella tularensis subsp. holarctica (strain FTNF002-00 / FTA)).